A 352-amino-acid polypeptide reads, in one-letter code: Pejvakin (352 aa).

This sequence belongs to the gasdermin family. In terms of assembly, interacts with MAP1LC3B; interaction is direct. Interacts with IQGAP1. Interacts with ROCK2. Interacts with TRIOBP.

Its subcellular location is the peroxisome membrane. It is found in the cell projection. The protein resides in the cilium. Peroxisome-associated protein required to protect auditory hair cells against noise-induced damage. Acts by regulating noise-induced peroxisome proliferation in auditory hair cells and neurons, and promoting autophagic degradation of damaged peroxisomes (pexophagy). Noise overexposure increases reactive oxygen species (ROS) levels, causing oxidative damage to auditory hair cells and resulting in hearing loss. PJVK acts as a ROS sensor that recruits the autophagy machinery to trigger pexophagy of peroxisomes damaged by oxidative stress. In addition to pexophagy, also required to promote peroxisome proliferation in response to sound overstimulation. The polypeptide is Pejvakin (Homo sapiens (Human)).